Consider the following 163-residue polypeptide: Troponin C (163 aa).

Ser-1 bears the N-acetylserine mark. EF-hand domains lie at 14–49, 50–85, 90–125, and 127–162; these read EQIS…LGMS, ISRE…AMQD, IPDD…CAGD, and LTDD…LKVR. Lys-20 carries the post-translational modification N6,N6-dimethyllysine; alternate. Lys-20 bears the N6-methyllysine; alternate mark. The Ca(2+) site is built by Asp-27, Asp-29, Asp-33, Glu-38, Asp-63, Asp-65, Ser-67, Thr-69, Glu-74, Asp-103, Asn-105, Asp-107, and Glu-114.

The protein belongs to the troponin C family.

Functionally, troponin is the central regulatory protein of striated muscle contraction. Tn consists of three components: Tn-I which is the inhibitor of actomyosin ATPase, Tn-T which contains the binding site for tropomyosin and Tn-C. The binding of calcium to Tn-C abolishes the inhibitory action of Tn on actin filaments. The protein is Troponin C of Branchiostoma lanceolatum (Common lancelet).